A 736-amino-acid chain; its full sequence is MTSTGKDGGAQHAQYVGPYRLEKTLGKGQTGLVKLGVHCVTCQKVAIKIVNREKLSESVLMKVEREIAILKLIEHPHVLKLHDVYENKKYLYLVLEHVSGGELFDYLVKKGRLTPKEARKFFRQIISALDFCHSHSICHRDLKPENLLLDEKNNIRIADFGMASLQVGDSLLETSCGSPHYACPEVIRGEKYDGRKADVWSCGVILFALLVGALPFDDDNLRQLLEKVKRGVFHMPHFIPPDCQSLLRGMIEVDAARRLTLEHIQKHIWYIGGKNEPEPEQPIPRKVQIRSLPSLEDIDPDVLDSMHSLGCFRDRNKLLQDLLSEEENQEKMIYFLLLDRKERYPSQEDEDLPPRNEIDPPRKRVDSPMLNRHGKRRPERKSMEVLSVTDGGSPVPARRAIEMAQHGQRSRSISGASSGLSTSPLSSPRVTPHPSPRGSPLPTPKGTPVHTPKESPAGTPNPTPPSSPSVGGVPWRARLNSIKNSFLGSPRFHRRKLQVPTPEEMSNLTPESSPELAKKSWFGNFISLEKEEQIFVVIKDKPLSSIKADIVHAFLSIPSLSHSVISQTSFRAEYKATGGPAVFQKPVKFQVDITYTEGGEAQKENGIYSVTFTLLSGPSRRFKRVVETIQAQLLSTHDPPAAQHLSDTTNCMEMMTGRLSKCGSPLSNFFDVIKQLFSDEKNGQAAQAPSTPAKRSAHGPLGDSAAAGPGPGGDAEYPTGKDTAKMGPPTARREQP.

A Protein kinase domain is found at 19-270 (YRLEKTLGKG…LEHIQKHIWY (252 aa)). Residues 25-33 (LGKGQTGLV) and lysine 48 each bind ATP. The Proton acceptor role is filled by aspartate 141. Threonine 174 carries the post-translational modification Phosphothreonine; by LKB1. At threonine 260 the chain carries Phosphothreonine; by PKA. Position 294 is a phosphoserine (serine 294). A UBA domain is found at 297 to 339 (DIDPDVLDSMHSLGCFRDRNKLLQDLLSEEENQEKMIYFLLLD). Basic and acidic residues predominate over residues 345–366 (PSQEDEDLPPRNEIDPPRKRVD). Disordered regions lie at residues 345–475 (PSQE…GVPW) and 493–513 (HRRKLQVPTPEEMSNLTPESS). Residues serine 367, serine 382, serine 393, serine 412, alanine 416, serine 423, and serine 427 each carry the phosphoserine modification. The span at 410 to 428 (SRSISGASSGLSTSPLSSP) shows a compositional bias: low complexity. Over residues 431 to 445 (TPHPSPRGSPLPTPK) the composition is skewed to pro residues. Position 455 is a phosphoserine (serine 455). A phosphothreonine mark is found at threonine 459, threonine 463, and threonine 509. Phosphoserine is present on residues serine 512, serine 513, and serine 520. The KEN box signature appears at 603-605 (KEN). The interval 681 to 736 (KNGQAAQAPSTPAKRSAHGPLGDSAAAGPGPGGDAEYPTGKDTAKMGPPTARREQP) is disordered. Positions 699-708 (GPLGDSAAAG) are enriched in low complexity.

Belongs to the protein kinase superfamily. CAMK Ser/Thr protein kinase family. SNF1 subfamily. Interacts with FZR1, a regulatory subunit of the APC ubiquitin ligase complex. Interacts with COPS5. Interacts with PAK1. Requires Mg(2+) as cofactor. Phosphorylated at Thr-174 by STK11/LKB1 in complex with STE20-related adapter-alpha (STRADA) pseudo kinase and CAB39. Not phosphorylated at Thr-174 by CaMKK2. In contrast, it is phosphorylated and activated by CaMKK1. May be inactivated via dephosphorylation of Thr-174 by PP2C. Phosphorylated at Thr-260 by PKA. Phosphorylation at Thr-260 by PKA was not observed in another study, but this may reflect differences in the experimental approach. Phosphorylation at Thr-260 seems to play a role in the regulation of insulin secretion. In terms of processing, polyubiquitinated by the APC complex in conjunction with FZR1, leading to its proteasomal degradation. Targeted for proteasomal degradation by interaction with COPS5. BRSK2 levels change during the cell cycle. BRSK2 levels are low at the G1/S boundary and gradually increase as cells progress into G2 phase. BRSK2 levels decrease rapidly at the end of mitosis. In terms of tissue distribution, detected in pancreas islets (at protein level).

Its subcellular location is the cytoplasm. The protein resides in the cytoskeleton. The protein localises to the microtubule organizing center. It localises to the centrosome. It is found in the perinuclear region. Its subcellular location is the endoplasmic reticulum. It carries out the reaction L-seryl-[protein] + ATP = O-phospho-L-seryl-[protein] + ADP + H(+). It catalyses the reaction L-threonyl-[protein] + ATP = O-phospho-L-threonyl-[protein] + ADP + H(+). The enzyme catalyses L-seryl-[tau protein] + ATP = O-phospho-L-seryl-[tau protein] + ADP + H(+). The catalysed reaction is L-threonyl-[tau protein] + ATP = O-phospho-L-threonyl-[tau protein] + ADP + H(+). Its activity is regulated as follows. Activated by phosphorylation on Thr-174 by STK11/LKB1. In terms of biological role, serine/threonine-protein kinase that plays a key role in polarization of neurons and axonogenesis, cell cycle progress and insulin secretion. Phosphorylates CDK16, CDC25C, MAPT/TAU, PAK1 and WEE1. Following phosphorylation and activation by STK11/LKB1, acts as a key regulator of polarization of cortical neurons, probably by mediating phosphorylation of microtubule-associated proteins such as MAPT/TAU at 'Thr-529' and 'Ser-579'. Also regulates neuron polarization by mediating phosphorylation of WEE1 at 'Ser-642' in postmitotic neurons, leading to down-regulate WEE1 activity in polarized neurons. Plays a role in the regulation of the mitotic cell cycle progress and the onset of mitosis. Plays a role in the regulation of insulin secretion in response to elevated glucose levels, probably via phosphorylation of CDK16 and PAK1. While BRSK2 phosphorylated at Thr-174 can inhibit insulin secretion, BRSK2 phosphorylated at Thr-260 can promote insulin secretion. Regulates reorganization of the actin cytoskeleton. May play a role in the apoptotic response triggered by endoplasmic reticulum (ER) stress. This is Serine/threonine-protein kinase BRSK2 (BRSK2) from Homo sapiens (Human).